Consider the following 241-residue polypeptide: MALCCFAFSAPCLHLRSRRSCSSCFLRAKSAAFSSARFLRRAFSSSFLFKYSAICFSSSFSRSFFRFLFSSARRCRSRCVSPRGGAFPPGGPRRSRPRLSSSRDSKPSSTVSSSSLSFNSSSKDNSPSTNSSTSRSSGHGTGKHRNSPTDTKLTMLIISPLPRVWTESSFRIPSLRVWRLCTRRLVPHLWGTMFGPPTSSRPTGHLSRASDHLGPHRWTRYRLSSTVPYPSTPLLPHPENL.

Short sequence motifs (nuclear localization signal) lie at residues 73–78 (RRCRSR) and 91–98 (GPRRSRPR). A disordered region spans residues 86-153 (AFPPGGPRRS…HRNSPTDTKL (68 aa)). Over residues 107-138 (PSSTVSSSSLSFNSSSKDNSPSTNSSTSRSSG) the composition is skewed to low complexity. A Mitochondrial targeting signal motif is present at residues 175-184 (LRVWRLCTRR).

It belongs to the HTLV-1 accessory protein p30II family. In terms of assembly, p30II binds to the KIX domains of CREBBP and EP300.

It is found in the host nucleus. It localises to the host nucleolus. Its subcellular location is the host mitochondrion inner membrane. Its function is as follows. p30II is a multifunctional regulator that sequesters EP300/CREBBP and down-regulates CREB-responsive element (CRE) and Tax-responsive element (TRE) mediated transcription. Specifically binds and represses tax/rex mRNA nuclear export. Since Tax and Rex are positive regulators of viral gene expression, their inhibition by p30II reduces virion production, and allows the virus to escape the host immune surveillance and persist latently in an immune-competent host. In terms of biological role, p13II increases mitochondrial permeability to monovalent cations, producing a rapid, membrane potential-dependent influx of potassium. This could involve a channel-forming activity. Interferes with cell proliferation and transformation and promotes apoptosis induced by ceramide and Fas ligand, probably using the Ras signaling. The protein is Accessory protein p30II of Human T-cell leukemia virus 1 (isolate Caribbea HS-35 subtype A) (HTLV-1).